The following is a 178-amino-acid chain: Protein FLOWERING LOCUS T 1 (178 aa).

This sequence belongs to the phosphatidylethanolamine-binding protein family. As to expression, expressed in leaves but not in shoot apex.

Its function is as follows. Involved in the regulation of vernalization and of flowering time. The sequence is that of Protein FLOWERING LOCUS T 1 from Brachypodium distachyon (Purple false brome).